Reading from the N-terminus, the 495-residue chain is Glutamyl-tRNA(Gln) amidotransferase subunit A (495 aa).

Active-site charge relay system residues include Lys-75 and Ser-150. Ser-174 (acyl-ester intermediate) is an active-site residue.

The protein belongs to the amidase family. GatA subfamily. In terms of assembly, heterotrimer of A, B and C subunits.

It carries out the reaction L-glutamyl-tRNA(Gln) + L-glutamine + ATP + H2O = L-glutaminyl-tRNA(Gln) + L-glutamate + ADP + phosphate + H(+). Its function is as follows. Allows the formation of correctly charged Gln-tRNA(Gln) through the transamidation of misacylated Glu-tRNA(Gln) in organisms which lack glutaminyl-tRNA synthetase. The reaction takes place in the presence of glutamine and ATP through an activated gamma-phospho-Glu-tRNA(Gln). In Ralstonia nicotianae (strain ATCC BAA-1114 / GMI1000) (Ralstonia solanacearum), this protein is Glutamyl-tRNA(Gln) amidotransferase subunit A.